A 785-amino-acid polypeptide reads, in one-letter code: MADFDSPPKLSGVQPPSEGVGGGRCSEISAELIRSLTELQELETVYERLCGEEKVVERELDALLEQQNTIESKMVTLHRMGPNLQLIEGDAKQLAGMITFTCNLAENVSSKVRQLDLAKNRLYQAIQRADDILDLKFCMDGVQTALRNEDYEQAAAHIHRYLCLDKSVIELSRQGKEGSMIDANLKLLQEAEQRLKAIVAEKFAVATKEGDLPQVERFFKIFPLLGLHEEGLRKFSEYLCKQVASKAEENLLMVLGTDMSDRRAAVIFADTLTLLFEGIARIVETHQPIVETYYGPGRLYTLIKYLQVECDRQVEKVVDKFIKQRDYHQQFRHVQNNLMRNSTTEKIEPRELDPILTEVTLMNARSELYLRFLKKRISSDFEVGDSMASEEVKQEHQKCLDKLLNNCLLSCTMQELIGLYVTMEEYFMRETVNKAVALDTYEKGQLTSSMVDDVFYIVKKCIGRALSSSSIDCLCAMINLATTELESDFRDVLCNKLRMGFPATTFQDIQRGVTSAVNIMHSSLQQGKFDTKGIESTDEAKMSFLVTLNNVEVCSENISTLKKTLESDCTKLFSQGIGGEQAQAKFDSCLSDLAAVSNKFRDLLQEGLTELNSTAIKPQVQPWINSFFSVSHNIEEEEFNDYEANDPWVQQFILNLEQQMAEFKASLSPVIYDSLTGLMTSLVTVELEKVVLKSTFNRLGGLQFDKELRSLIAYLTTVTTWTIRDKFARLSQMATILNLERVTEILDYWGPNSGPLTWRLTPAEVRQVLALRIDFRSEDIKRLRL.

Positions 1-24 (MADFDSPPKLSGVQPPSEGVGGGR) are disordered. N-acetylalanine is present on A2. Residues 2–84 (ADFDSPPKLS…VTLHRMGPNL (83 aa)) are interaction with SCFD1. A Phosphoserine modification is found at S6. Residues 85 to 153 (QLIEGDAKQL…TALRNEDYEQ (69 aa)) form an interaction with STX5 region. The d domain stretch occupies residues 618–740 (PQVQPWINSF…SQMATILNLE (123 aa)). The e domain; essential for proper cell surface glycosylation stretch occupies residues 741-785 (RVTEILDYWGPNSGPLTWRLTPAEVRQVLALRIDFRSEDIKRLRL).

It belongs to the COG4 family. In terms of assembly, monomer. Component of the conserved oligomeric Golgi (COG) complex which is composed of eight different subunits and is required for normal Golgi morphology and localization. Mediates interaction of SCFD1 with the COG complex. Interacts with STX5.

The protein localises to the cytoplasm. The protein resides in the cytosol. Its subcellular location is the golgi apparatus membrane. Its function is as follows. Required for normal Golgi function. Plays a role in SNARE-pin assembly and Golgi-to-ER retrograde transport via its interaction with SCFD1. The polypeptide is Conserved oligomeric Golgi complex subunit 4 (COG4) (Pongo abelii (Sumatran orangutan)).